Here is a 71-residue protein sequence, read N- to C-terminus: Vitellogenin-B1 (71 aa).

An N-terminal signal peptide occupies residues 1-15 (MRGIILAQLLALAGS). The region spanning 24–71 (FSESKPYVYNYEGIILNGIPENGLARSGIKLNCKAEISGYAQRSYMLK) is the Vitellogenin domain.

As to expression, produced by the liver, secreted into the blood and then sequestered by receptor mediated endocytosis into growing oocytes, where it is generally cleaved, giving rise to the respective yolk components.

In terms of biological role, precursor of the major egg-yolk proteins that are sources of nutrients during early development of oviparous organisms. This Xenopus laevis (African clawed frog) protein is Vitellogenin-B1.